We begin with the raw amino-acid sequence, 229 residues long: Ribonuclease 3 (229 aa).

Positions 5–127 (LDRLERKLGY…LIGAIYLDTG (123 aa)) constitute an RNase III domain. Glu40 is a Mg(2+) binding site. Asp44 is an active-site residue. Residues Asp113 and Glu116 each contribute to the Mg(2+) site. Residue Glu116 is part of the active site. The 71-residue stretch at 154 to 224 (DPKTRLQEFL…AAAALVALGV (71 aa)) folds into the DRBM domain.

Belongs to the ribonuclease III family. As to quaternary structure, homodimer. Requires Mg(2+) as cofactor.

It is found in the cytoplasm. It catalyses the reaction Endonucleolytic cleavage to 5'-phosphomonoester.. Functionally, digests double-stranded RNA. Involved in the processing of primary rRNA transcript to yield the immediate precursors to the large and small rRNAs (23S and 16S). Processes some mRNAs, and tRNAs when they are encoded in the rRNA operon. Processes pre-crRNA and tracrRNA of type II CRISPR loci if present in the organism. The polypeptide is Ribonuclease 3 (Pseudomonas aeruginosa (strain LESB58)).